The following is a 557-amino-acid chain: Urocanate hydratase (557 aa).

The tract at residues 1 to 20 is disordered; the sequence is MSNPRHNEREVRSPRGDELN. NAD(+) is bound by residues 52 to 53, Gln130, 176 to 178, Glu196, Arg201, 242 to 243, 263 to 267, 273 to 274, and Tyr322; these read GG, GMG, NA, QTSAH, and YL. Cys410 is an active-site residue. An NAD(+)-binding site is contributed by Gly492.

Belongs to the urocanase family. It depends on NAD(+) as a cofactor.

The protein localises to the cytoplasm. It catalyses the reaction 4-imidazolone-5-propanoate = trans-urocanate + H2O. Its pathway is amino-acid degradation; L-histidine degradation into L-glutamate; N-formimidoyl-L-glutamate from L-histidine: step 2/3. Catalyzes the conversion of urocanate to 4-imidazolone-5-propionate. In Brucella melitensis biotype 2 (strain ATCC 23457), this protein is Urocanate hydratase.